The following is a 317-amino-acid chain: Pinoresinol reductase 1 (317 aa).

Residues Thr-18, Tyr-20, Ile-21, Arg-41, Lys-50, Ser-90, Gly-91, Arg-95, Asn-98, Ser-121, and Glu-122 each contribute to the NADP(+) site. Met-125 is a binding site for (-)-pinoresinol. NADP(+)-binding residues include Lys-144 and Phe-166. Residue Lys-144 is the Proton acceptor of the active site. Residues Met-177 and Val-178 each coordinate (-)-pinoresinol.

It belongs to the NmrA-type oxidoreductase family. Isoflavone reductase subfamily. In terms of assembly, forms homodimers. As to expression, expressed in roots and stems.

The enzyme catalyses (-)-lariciresinol + NADP(+) = (-)-pinoresinol + NADPH + H(+). The catalysed reaction is (+)-lariciresinol + NADP(+) = (+)-pinoresinol + NADPH + H(+). Reductase involved in lignan biosynthesis. Involved in secondary cell wall biosynthesis in fiber cells. Unlike conventional pinoresinol reductases that can reduce both pinoresinol and lariciresinol, PRR1 shows a strict substrate preference toward pinoresinol. Active on both (+) and (-)-pinoresinol. Abstracts the 4R-hydride from the NADPH cofactor during catalysis. This Arabidopsis thaliana (Mouse-ear cress) protein is Pinoresinol reductase 1.